Consider the following 283-residue polypeptide: 4-diphosphocytidyl-2-C-methyl-D-erythritol kinase (283 aa).

Residue Lys-10 is part of the active site. Position 95–105 (95–105) interacts with ATP; the sequence is PVAAGLGGGSS. Asp-137 is an active-site residue.

The protein belongs to the GHMP kinase family. IspE subfamily.

It catalyses the reaction 4-CDP-2-C-methyl-D-erythritol + ATP = 4-CDP-2-C-methyl-D-erythritol 2-phosphate + ADP + H(+). It functions in the pathway isoprenoid biosynthesis; isopentenyl diphosphate biosynthesis via DXP pathway; isopentenyl diphosphate from 1-deoxy-D-xylulose 5-phosphate: step 3/6. Its function is as follows. Catalyzes the phosphorylation of the position 2 hydroxy group of 4-diphosphocytidyl-2C-methyl-D-erythritol. The polypeptide is 4-diphosphocytidyl-2-C-methyl-D-erythritol kinase (Limosilactobacillus reuteri (strain DSM 20016) (Lactobacillus reuteri)).